Consider the following 198-residue polypeptide: 5'-deoxynucleotidase ETA_12010 (198 aa).

Residues 18–19 (RW) and H33 each bind substrate. The 113-residue stretch at 30–142 (VSEHSLQVAM…VKQADALCAY (113 aa)) folds into the HD domain. A divalent metal cation contacts are provided by H33, H68, and D69. Substrate is bound by residues D69, 77–80 (DLPT), and D137. Residue D137 participates in a divalent metal cation binding.

This sequence belongs to the 5DNU family. As to quaternary structure, homodimer. The cofactor is a divalent metal cation.

The protein localises to the cytoplasm. It carries out the reaction a 2'-deoxyribonucleoside 5'-phosphate + H2O = a 2'-deoxyribonucleoside + phosphate. In terms of biological role, catalyzes the strictly specific dephosphorylation of 2'-deoxyribonucleoside 5'-monophosphates. In Erwinia tasmaniensis (strain DSM 17950 / CFBP 7177 / CIP 109463 / NCPPB 4357 / Et1/99), this protein is 5'-deoxynucleotidase ETA_12010.